Consider the following 322-residue polypeptide: Phosphatidylserine decarboxylase proenzyme (322 aa).

Catalysis depends on charge relay system; for autoendoproteolytic cleavage activity residues Asp-90, His-147, and Ser-254. The active-site Schiff-base intermediate with substrate; via pyruvic acid; for decarboxylase activity is Ser-254. Ser-254 bears the Pyruvic acid (Ser); by autocatalysis mark. A disordered region spans residues 297–322 (PAPLPAEEIKAEHDASPLVDNKKDDT). Basic and acidic residues predominate over residues 303–322 (EEIKAEHDASPLVDNKKDDT).

Belongs to the phosphatidylserine decarboxylase family. PSD-B subfamily. Prokaryotic type I sub-subfamily. In terms of assembly, heterodimer of a large membrane-associated beta subunit and a small pyruvoyl-containing alpha subunit. It depends on pyruvate as a cofactor. Is synthesized initially as an inactive proenzyme. Formation of the active enzyme involves a self-maturation process in which the active site pyruvoyl group is generated from an internal serine residue via an autocatalytic post-translational modification. Two non-identical subunits are generated from the proenzyme in this reaction, and the pyruvate is formed at the N-terminus of the alpha chain, which is derived from the carboxyl end of the proenzyme. The autoendoproteolytic cleavage occurs by a canonical serine protease mechanism, in which the side chain hydroxyl group of the serine supplies its oxygen atom to form the C-terminus of the beta chain, while the remainder of the serine residue undergoes an oxidative deamination to produce ammonia and the pyruvoyl prosthetic group on the alpha chain. During this reaction, the Ser that is part of the protease active site of the proenzyme becomes the pyruvoyl prosthetic group, which constitutes an essential element of the active site of the mature decarboxylase.

The protein resides in the cell membrane. The enzyme catalyses a 1,2-diacyl-sn-glycero-3-phospho-L-serine + H(+) = a 1,2-diacyl-sn-glycero-3-phosphoethanolamine + CO2. It participates in phospholipid metabolism; phosphatidylethanolamine biosynthesis; phosphatidylethanolamine from CDP-diacylglycerol: step 2/2. Functionally, catalyzes the formation of phosphatidylethanolamine (PtdEtn) from phosphatidylserine (PtdSer). The polypeptide is Phosphatidylserine decarboxylase proenzyme (Salmonella typhi).